A 349-amino-acid polypeptide reads, in one-letter code: Nuclear distribution protein nudE homolog 1-B (349 aa).

The stretch at 22–189 (VAMKYKQCSE…ELAVQQKQEK (168 aa)) forms a coiled coil.

The protein belongs to the nudE family. Self-associates. Interacts with pafah1b1. In terms of processing, phosphorylated in mitosis.

The protein resides in the cytoplasm. Its subcellular location is the cytoskeleton. The protein localises to the microtubule organizing center. It is found in the centrosome. It localises to the spindle. The protein resides in the chromosome. Its subcellular location is the centromere. The protein localises to the kinetochore. It is found in the cleavage furrow. It localises to the cytoplasmic vesicle membrane. In terms of biological role, required for centrosome duplication and formation and function of the mitotic spindle. The chain is Nuclear distribution protein nudE homolog 1-B (nde1-b) from Xenopus laevis (African clawed frog).